The sequence spans 478 residues: Shikimate biosynthesis protein AroDE (478 aa).

Residues 1 to 208 (MLCTTISGPS…LKHHYFYNFA (208 aa)) form a 3-dehydroquinate dehydratase region. Residues Ser21, 29 to 31 (EMR), and 55 to 57 (AWK) contribute to the 3-dehydroquinate site. His110 (proton donor/acceptor; for 3-dehydroquinate dehydratase activity) is an active-site residue. Catalysis depends on Lys133, which acts as the Schiff-base intermediate with substrate; for 3-dehydroquinate dehydratase activity. Positions 171 and 196 each coordinate 3-dehydroquinate. A shikimate 5-dehydrogenase region spans residues 209 to 478 (SLSAQSPICA…VLASLFSIAP (270 aa)). 226–228 (SIG) is a shikimate binding site. Lys277 (proton acceptor; for shikimate dehydrogenase activity) is an active-site residue. Shikimate is bound by residues Asn298 and Asp313. NADP(+) is bound by residues 337–341 (GAGGA), 360–362 (NRT), and Gly435. Gln442 is a binding site for shikimate.

It in the N-terminal section; belongs to the type-I 3-dehydroquinase family. In the C-terminal section; belongs to the shikimate dehydrogenase family.

The enzyme catalyses 3-dehydroquinate = 3-dehydroshikimate + H2O. The catalysed reaction is shikimate + NADP(+) = 3-dehydroshikimate + NADPH + H(+). It participates in metabolic intermediate biosynthesis; chorismate biosynthesis; chorismate from D-erythrose 4-phosphate and phosphoenolpyruvate: step 3/7. Its pathway is metabolic intermediate biosynthesis; chorismate biosynthesis; chorismate from D-erythrose 4-phosphate and phosphoenolpyruvate: step 4/7. Bifunctional enzyme that catalyzes two sequential steps of the aromatic amino acids biosynthetic pathway. In the first reaction, the AroD domain catalyzes the cis-dehydration of 3-dehydroquinate (DHQ) and introduces the first double bond of the aromatic ring to yield 3-dehydroshikimate; in the second reaction, the AroE domain catalyzes the reversible NADPH linked reduction of 3-dehydroshikimate (DHSA) to yield shikimate (SA). The chain is Shikimate biosynthesis protein AroDE from Chlamydia trachomatis serovar D (strain ATCC VR-885 / DSM 19411 / UW-3/Cx).